The chain runs to 976 residues: Vacuolar membrane protease (976 aa).

Topologically, residues 1–15 (MKLKSVFRSVLKYRK) are cytoplasmic. Residues 16-36 (TNLSLLLLITYSIITLLYIFD) form a helical membrane-spanning segment. The Vacuolar portion of the chain corresponds to 37–359 (HERYKLNLPK…KFFVISAKTL (323 aa)). 2 N-linked (GlcNAc...) asparagine glycosylation sites follow: asparagine 96 and asparagine 121. Histidine 156 and aspartate 168 together coordinate Zn(2+). Asparagine 189 carries an N-linked (GlcNAc...) asparagine glycan. Glutamate 200 (proton acceptor) is an active-site residue. Glutamate 201 is a Zn(2+) binding site. N-linked (GlcNAc...) asparagine glycans are attached at residues asparagine 212 and asparagine 217. Zn(2+) is bound by residues glutamate 226 and histidine 300. Residues 360 to 380 (FYWNCIFLLVSPVVAIGLYLI) form a helical membrane-spanning segment. Over 381–392 (SRDRMTWKSHSW) the chain is Cytoplasmic. Residues 393–412 (LSWTRFPLSLAAGIIVQKLF) form a helical membrane-spanning segment. At 413-428 (SNDIIRSNPLTFSRNY) the chain is on the vacuolar side. The chain crosses the membrane as a helical span at residues 429 to 449 (FWPISAFFTQVIFTSYVLINC). Topologically, residues 450-461 (SNFFFPCADMKS) are cytoplasmic. The chain crosses the membrane as a helical span at residues 462 to 482 (LSIIELFIILWTILLFTSKLL). At 483–496 (YSSDYRYTGLYPLS) the chain is on the vacuolar side. Residues 497–517 (IFFLLSTIAAILRLLALALGM) form a helical membrane-spanning segment. At 518 to 627 (RTRKRLGREC…NSLKLEYTDY (110 aa)) the chain is on the cytoplasmic side. Positions 528-610 (RDHHSNYSSH…PLLKGSNSME (83 aa)) are disordered. Residues 549–558 (NLEQPQDQFT) are compositionally biased toward polar residues. Positions 559 to 570 (SSQDDQASIQDD) are enriched in low complexity. Basic and acidic residues predominate over residues 582-601 (NVDEDHGMDSSSQQHDERVP). A helical membrane pass occupies residues 628-648 (AWIIQFLLIVPIPSFILFNSV). Residues 649 to 668 (DVIMDALNHTVQEGSKATFD) are Vacuolar-facing. Asparagine 656 is a glycosylation site (N-linked (GlcNAc...) asparagine). A helical membrane pass occupies residues 669-689 (VLRFGMVGSILMALPILPFFY). The Cytoplasmic portion of the chain corresponds to 690–692 (KVN). The helical transmembrane segment at 693–713 (YITISLTALLFLISASKTLLV) threads the bilayer. Topologically, residues 714 to 976 (HPFTNSNPLK…LVIVKDAIIL (263 aa)) are vacuolar. N-linked (GlcNAc...) asparagine glycosylation is found at asparagine 768, asparagine 796, asparagine 811, asparagine 866, and asparagine 937.

Belongs to the peptidase M28 family. Zn(2+) is required as a cofactor.

Its subcellular location is the vacuole membrane. In terms of biological role, may be involved in vacuolar sorting and osmoregulation. The sequence is that of Vacuolar membrane protease from Saccharomyces cerevisiae (strain YJM789) (Baker's yeast).